The primary structure comprises 124 residues: Mitochondrial import inner membrane translocase subunit TIM16 (124 aa).

The interval 58–109 (EAQQILNISKLSPEEVQNYEHLFKVNDKSVGDSFYLQSKVVRAKERLDEELQ) is J-like. The residue at position 69 (S69) is a Phosphoserine.

Belongs to the TIM16/PAM16 family. In terms of assembly, probable component of the PAM complex at least composed of a mitochondrial HSP70 protein, GRPEL1 or GRPEL2, TIMM44, TIMM16/PAM16 and TIMM14/DNAJC19. Interacts with DNAJC19. Directly interacts with DNAJC15; this interaction counteracts DNAJC15-dependent stimulation of HSPA9 ATPase activity. Associates with the TIM23 complex.

It is found in the mitochondrion inner membrane. Regulates ATP-dependent protein translocation into the mitochondrial matrix. Inhibits DNAJC19 stimulation of HSPA9/Mortalin ATPase activity. The chain is Mitochondrial import inner membrane translocase subunit TIM16 (Magmas-ps1) from Rattus norvegicus (Rat).